Here is a 982-residue protein sequence, read N- to C-terminus: Ubiquitin carboxyl-terminal hydrolase 37 (982 aa).

A KEN box 1 motif is present at residues Lys32–Asn34. Short sequence motifs (D-box) lie at residues Arg71–Asn79 and Arg96–Asn105. Ser115 is subject to Phosphoserine. The interval Arg128–Lys162 is disordered. The span at Gln137–Arg149 shows a compositional bias: polar residues. Over residues Gly150–Phe160 the composition is skewed to basic and acidic residues. Residues Arg161–Arg169 carry the D-box 3 motif. A Phosphoserine modification is found at Ser171. Residues Thr183–Leu201 are compositionally biased toward low complexity. The interval Thr183 to Phe307 is disordered. Ser213 carries the post-translational modification Phosphoserine. The short motif at Lys224–Asn226 is the KEN box 2 element. Positions Ser246 to Arg260 are enriched in basic and acidic residues. The span at Tyr282 to Ala301 shows a compositional bias: polar residues. One can recognise a USP domain in the interval Gln343 to Lys954. The active-site Nucleophile is Cys352. Position 631 is a phosphoserine; by CDK2 (Ser631). Phosphoserine occurs at positions 653 and 655. Disordered stretches follow at residues Ile672–Ala705 and Lys720–Asp798. Basic and acidic residues-rich tracts occupy residues Lys684–Leu698 and Lys720–Pro735. Positions Ser707–Ser726 constitute a UIM 1 domain. Phosphoserine is present on Ser773. Residues Ile777–Thr789 are compositionally biased toward basic and acidic residues. The KEN box 3 signature appears at Lys785–Asn787. UIM domains lie at Arg809 to Trp828 and Lys831 to Ser850. The Proton acceptor role is filled by His909.

This sequence belongs to the peptidase C19 family. As to quaternary structure, interacts with FZR1/CDH1. Interacts with CDT1. Post-translationally, polyubiquitinated via 'Lys-11'-linked ubiquitin by the APC(CDH1) complex during late mitosis, leading to its degradation. Able to mediate auto-deubiquitination. Phosphorylated at Ser-631 by CDK2 during G1/S phase but not during mitosis; phosphorylation at Ser-631 is required for deubiquitinase activity. Also polyubiquitinated during early G1 phase, without leading to degradation. Phosphorylated at Ser-115 by ATM following DNA damage, which in turn increases its deubiquitination activity towards BLM.

It is found in the nucleus. The protein resides in the chromosome. It catalyses the reaction Thiol-dependent hydrolysis of ester, thioester, amide, peptide and isopeptide bonds formed by the C-terminal Gly of ubiquitin (a 76-residue protein attached to proteins as an intracellular targeting signal).. Its function is as follows. Deubiquitinase that plays a role in different processes including cell cycle regulation, DNA replication or DNA damage response. Antagonizes the anaphase-promoting complex (APC/C) during G1/S transition by mediating deubiquitination of cyclin-A (CCNA1 and CCNA2), thereby promoting S phase entry. Specifically mediates deubiquitination of 'Lys-11'-linked polyubiquitin chains, a specific ubiquitin-linkage type mediated by the APC/C complex. Phosphorylation at Ser-628 during G1/S phase maximizes the deubiquitinase activity, leading to prevent degradation of cyclin-A (CCNA1 and CCNA2). Plays an important role in the regulation of DNA replication by stabilizing the licensing factor CDT1. Also plays an essential role beyond S-phase entry to promote the efficiency and fidelity of replication by deubiquitinating checkpoint kinase 1/CHK1, promoting its stability. Sustains the DNA damage response (DDR) by deubiquitinating and stabilizing the ATP-dependent DNA helicase BLM. Mechanistically, DNA double-strand breaks (DSB) promotes ATM-mediated phosphorylation of USP37 and enhances the binding between USP37 and BLM. Promotes cell migration by deubiquitinating and stabilizing the epithelial-mesenchymal transition (EMT)-inducing transcription factor SNAI. Plays a role in the regulation of mitotic spindle assembly and mitotic progression by associating with chromatin-associated WAPL and stabilizing it through deubiquitination. The sequence is that of Ubiquitin carboxyl-terminal hydrolase 37 (USP37) from Sus scrofa (Pig).